Here is a 928-residue protein sequence, read N- to C-terminus: 2-oxoglutarate dehydrogenase E1 component (928 aa).

The protein belongs to the alpha-ketoglutarate dehydrogenase family. Homodimer. Part of the 2-oxoglutarate dehydrogenase (OGDH) complex composed of E1 (2-oxoglutarate dehydrogenase), E2 (dihydrolipoamide succinyltransferase) and E3 (dihydrolipoamide dehydrogenase); the complex contains multiple copies of the three enzymatic components (E1, E2 and E3). Thiamine diphosphate is required as a cofactor.

It carries out the reaction N(6)-[(R)-lipoyl]-L-lysyl-[protein] + 2-oxoglutarate + H(+) = N(6)-[(R)-S(8)-succinyldihydrolipoyl]-L-lysyl-[protein] + CO2. Its function is as follows. E1 component of the 2-oxoglutarate dehydrogenase (OGDH) complex which catalyzes the decarboxylation of 2-oxoglutarate, the first step in the conversion of 2-oxoglutarate to succinyl-CoA and CO(2). In Rickettsia conorii (strain ATCC VR-613 / Malish 7), this protein is 2-oxoglutarate dehydrogenase E1 component (sucA).